The following is a 601-amino-acid chain: Elongation factor 4 (601 aa).

The 183-residue stretch at 2–184 (DLIRNFSIIA…EMIARVPPPT (183 aa)) folds into the tr-type G domain. GTP-binding positions include 14–19 (DHGKST) and 131–134 (NKID).

The protein belongs to the TRAFAC class translation factor GTPase superfamily. Classic translation factor GTPase family. LepA subfamily.

The protein resides in the cell inner membrane. The catalysed reaction is GTP + H2O = GDP + phosphate + H(+). Functionally, required for accurate and efficient protein synthesis under certain stress conditions. May act as a fidelity factor of the translation reaction, by catalyzing a one-codon backward translocation of tRNAs on improperly translocated ribosomes. Back-translocation proceeds from a post-translocation (POST) complex to a pre-translocation (PRE) complex, thus giving elongation factor G a second chance to translocate the tRNAs correctly. Binds to ribosomes in a GTP-dependent manner. This is Elongation factor 4 from Polynucleobacter necessarius subsp. necessarius (strain STIR1).